The following is a 297-amino-acid chain: 4-hydroxy-tetrahydrodipicolinate synthase (297 aa).

Thr47 lines the pyruvate pocket. The active-site Proton donor/acceptor is the Tyr135. Lys163 (schiff-base intermediate with substrate) is an active-site residue. Ile205 is a binding site for pyruvate.

Belongs to the DapA family. As to quaternary structure, homotetramer; dimer of dimers.

The protein resides in the cytoplasm. It catalyses the reaction L-aspartate 4-semialdehyde + pyruvate = (2S,4S)-4-hydroxy-2,3,4,5-tetrahydrodipicolinate + H2O + H(+). The protein operates within amino-acid biosynthesis; L-lysine biosynthesis via DAP pathway; (S)-tetrahydrodipicolinate from L-aspartate: step 3/4. Catalyzes the condensation of (S)-aspartate-beta-semialdehyde [(S)-ASA] and pyruvate to 4-hydroxy-tetrahydrodipicolinate (HTPA). This is 4-hydroxy-tetrahydrodipicolinate synthase from Cytophaga hutchinsonii (strain ATCC 33406 / DSM 1761 / CIP 103989 / NBRC 15051 / NCIMB 9469 / D465).